Here is a 236-residue protein sequence, read N- to C-terminus: Transmembrane protein 65 (236 aa).

A mitochondrion-targeting transit peptide spans 1–57 (MSRLLPLLRSRTARSLRPGPAAAAAPRPPSWCCCGRGLLALAAPGGPRALGTHPKKE). The Cytoplasmic segment spans residues 58–106 (PIEALNTAQGARDFIYSLHSSERSCLLKELHRFESIAIAQEKLEAQPPT). Residues 107–127 (PGQLRYVFIHNAIPFIGFGFL) traverse the membrane as a helical segment. Topologically, residues 128-138 (DNAIMIVAGTH) are extracellular. A helical transmembrane segment spans residues 139-161 (IELSIGIILGISTMAAAALGNLV). At 162-205 (SDLAGLGLAGYVEALASRLGLSIPDLSPKQVDMWQTRVSSHLGK) the chain is on the cytoplasmic side. A helical membrane pass occupies residues 206 to 226 (AVGVTIGCILGMFPLIFFGGG). Residues 227–236 (EDDEKLEKKN) lie on the Extracellular side of the membrane.

As to quaternary structure, monomer. Homodimer. Interacts with GJA1. Interacts weakly with DSP. Interacts with SCN1B.

The protein resides in the cell membrane. The protein localises to the mitochondrion inner membrane. Its function is as follows. Essential for maintaining proper cardiac intercalated disk (ICD) structure and function as well as cardiac conduction velocity in the heart. Its association with SCN1B is required for stabilizing the perinexus in the ICD and for localization of GJA1 and SCN5A to the ICD. May regulate the function of the gap junction protein GJA1 and may contribute to the stability and proper localization of GJA1 to cardiac intercalated disk thereby regulating gap junction communication. Regulates mitochondrial respiration and mitochondrial DNA copy number maintenance. The protein is Transmembrane protein 65 (TMEM65) of Bos taurus (Bovine).